Consider the following 448-residue polypeptide: F-box/FBD/LRR-repeat protein At2g04230 (448 aa).

Residues 12-64 form the F-box domain; that stretch reads EDRISDLPDALLLQILSSLPTENAIATSVLSKRWRSLWTMLPKLKFDSNFNPV. LRR repeat units lie at residues 72–98, 149–176, 177–202, 204–225, 226–251, 271–296, and 319–345; these read PTMF…HLSF, ILKL…YLDQ, VHFK…VVHR, SNAD…TIED, LRQE…NING, ISNV…ILHL, and THER…KLTD. Residues 359 to 410 enclose the FBD domain; that stretch reads KWNPPKCAPECLLFHLETFLWIGYEWQRGDEKEVATYILENARRLKKATFST.

The polypeptide is F-box/FBD/LRR-repeat protein At2g04230 (Arabidopsis thaliana (Mouse-ear cress)).